Consider the following 632-residue polypeptide: Maltase 1 (632 aa).

The segment covering 1–29 (MEEGERWREGHVYQRSSETRKPTNYDRPD) has biased composition (basic and acidic residues). The interval 1-30 (MEEGERWREGHVYQRSSETRKPTNYDRPDS) is disordered. N-linked (GlcNAc...) asparagine glycans are attached at residues N179 and N212. The active-site Nucleophile is the D280. N333 carries an N-linked (GlcNAc...) asparagine glycan. The Proton donor role is filled by E348. 3 N-linked (GlcNAc...) asparagine glycosylation sites follow: N461, N575, and N578.

This sequence belongs to the glycosyl hydrolase 13 family.

It carries out the reaction Hydrolysis of terminal, non-reducing (1-&gt;4)-linked alpha-D-glucose residues with release of alpha-D-glucose.. In Drosophila virilis (Fruit fly), this protein is Maltase 1 (Mal-B1).